Consider the following 219-residue polypeptide: Cytidylate kinase (219 aa).

Position 10–18 (glycine 10–threonine 18) interacts with ATP.

The protein belongs to the cytidylate kinase family. Type 1 subfamily.

It is found in the cytoplasm. The catalysed reaction is CMP + ATP = CDP + ADP. The enzyme catalyses dCMP + ATP = dCDP + ADP. The chain is Cytidylate kinase from Staphylococcus aureus (strain JH9).